A 36-amino-acid chain; its full sequence is Beta/delta/mu-theraphotoxin-Pv1 (36 aa).

3 disulfide bridges follow: Cys3–Cys17, Cys10–Cys22, and Cys16–Cys30. At Phe36 the chain carries Phenylalanine amide.

Belongs to the neurotoxin 10 (Hwtx-1) family. In terms of tissue distribution, expressed by the venom gland.

The protein resides in the secreted. Its function is as follows. Gating-modifier toxin that targets voltage-gated sodium channels. Inhibits the inactivation of Nav1.7/SCN9A. The sequence is that of Beta/delta/mu-theraphotoxin-Pv1 from Poecilotheria vittata (Ghost ornamental tarantula).